We begin with the raw amino-acid sequence, 215 residues long: Cytochrome b6 (215 aa).

A helical membrane pass occupies residues 32-52 (IFYCLGGITFTCFLVQVATGF). Cys-35 is a heme c binding site. Residues His-86 and His-100 each coordinate heme b. 3 consecutive transmembrane segments (helical) span residues 90 to 110 (ASMM…TGGF), 116 to 136 (STWI…VTGY), and 186 to 206 (LHTF…FLMI). The heme b site is built by His-187 and His-202.

This sequence belongs to the cytochrome b family. PetB subfamily. As to quaternary structure, the 4 large subunits of the cytochrome b6-f complex are cytochrome b6, subunit IV (17 kDa polypeptide, PetD), cytochrome f and the Rieske protein, while the 4 small subunits are PetG, PetL, PetM and PetN. The complex functions as a dimer. The cofactor is heme b. Heme c is required as a cofactor.

It localises to the plastid. Its subcellular location is the chloroplast thylakoid membrane. Functionally, component of the cytochrome b6-f complex, which mediates electron transfer between photosystem II (PSII) and photosystem I (PSI), cyclic electron flow around PSI, and state transitions. The sequence is that of Cytochrome b6 from Tetradesmus obliquus (Green alga).